The following is a 435-amino-acid chain: Glutamyl-tRNA reductase (435 aa).

Substrate-binding positions include 49–52, S118, 123–125, and Q129; these read TCNR and EPQ. C50 acts as the Nucleophile in catalysis. Residue 203–208 coordinates NADP(+); that stretch reads GAGETI.

It belongs to the glutamyl-tRNA reductase family. Homodimer.

It carries out the reaction (S)-4-amino-5-oxopentanoate + tRNA(Glu) + NADP(+) = L-glutamyl-tRNA(Glu) + NADPH + H(+). The protein operates within porphyrin-containing compound metabolism; protoporphyrin-IX biosynthesis; 5-aminolevulinate from L-glutamyl-tRNA(Glu): step 1/2. Catalyzes the NADPH-dependent reduction of glutamyl-tRNA(Glu) to glutamate 1-semialdehyde (GSA). The chain is Glutamyl-tRNA reductase from Glaesserella parasuis serovar 5 (strain SH0165) (Haemophilus parasuis).